The following is a 265-amino-acid chain: Leucine-rich repeat-containing protein Bf66946 (265 aa).

The first 20 residues, 1-20, serve as a signal peptide directing secretion; sequence MALRDIFLLSMAMTAVTVQA. 2 cysteine pairs are disulfide-bonded: C21/C27 and C25/C39. One can recognise an LRRNT domain in the interval 21 to 50; sequence CPSACKCTVSLYGEMVVACGGMGLTEIPED. LRR repeat units follow at residues 51-75, 76-99, and 100-123; these read IPHR…SFKG, LRNL…ALRH, and LGHL…LFDF. N-linked (GlcNAc...) asparagine glycosylation is present at N64. The region spanning 142–193 is the LRRCT domain; sequence NPWGCDCRMAWLAQELAGGSKTFGDRHMECATPAALAGRGLSEIPQTSFVCT. Disulfide bonds link C146–C171 and C148–C192. Residues 220–240 traverse the membrane as a helical segment; sequence VAVVFGCITGLVTILLLVLTA.

Its subcellular location is the cell membrane. In terms of biological role, binds selectively to the Gram-positive bacteria S.aureus and S.pneumoniae. Does not adhere to the Gram-negative bacteria E.coli and S.enterica. Probably recognizes peptidoglycans expressed on the bacterial cell surface. The sequence is that of Leucine-rich repeat-containing protein Bf66946 from Branchiostoma floridae (Florida lancelet).